The sequence spans 264 residues: Thiazole synthase (264 aa).

Lys-106 serves as the catalytic Schiff-base intermediate with DXP. Residues Gly-167, 193 to 194 (AG), and 215 to 216 (NT) contribute to the 1-deoxy-D-xylulose 5-phosphate site.

The protein belongs to the ThiG family. In terms of assembly, homotetramer. Forms heterodimers with either ThiH or ThiS.

The protein localises to the cytoplasm. The enzyme catalyses [ThiS sulfur-carrier protein]-C-terminal-Gly-aminoethanethioate + 2-iminoacetate + 1-deoxy-D-xylulose 5-phosphate = [ThiS sulfur-carrier protein]-C-terminal Gly-Gly + 2-[(2R,5Z)-2-carboxy-4-methylthiazol-5(2H)-ylidene]ethyl phosphate + 2 H2O + H(+). It functions in the pathway cofactor biosynthesis; thiamine diphosphate biosynthesis. Its function is as follows. Catalyzes the rearrangement of 1-deoxy-D-xylulose 5-phosphate (DXP) to produce the thiazole phosphate moiety of thiamine. Sulfur is provided by the thiocarboxylate moiety of the carrier protein ThiS. In vitro, sulfur can be provided by H(2)S. This chain is Thiazole synthase, found in Xanthomonas euvesicatoria pv. vesicatoria (strain 85-10) (Xanthomonas campestris pv. vesicatoria).